A 537-amino-acid polypeptide reads, in one-letter code: CTP synthase (537 aa).

An amidoligase domain region spans residues 1 to 269 (MNQTKYIFVT…DVVALKKLDL (269 aa)). Ser-15 is a binding site for CTP. Ser-15 provides a ligand contact to UTP. 16 to 21 (SLGKGI) serves as a coordination point for ATP. Tyr-56 serves as a coordination point for L-glutamine. Position 73 (Asp-73) interacts with ATP. Mg(2+)-binding residues include Asp-73 and Glu-143. CTP contacts are provided by residues 150 to 152 (DIE), 190 to 195 (KTKPTQ), and Lys-226. UTP is bound by residues 190 to 195 (KTKPTQ) and Lys-226. The Glutamine amidotransferase type-1 domain maps to 295–537 (NIGLVGKYVE…VAAAVNAHKK (243 aa)). Gly-357 is an L-glutamine binding site. Catalysis depends on Cys-384, which acts as the Nucleophile; for glutamine hydrolysis. L-glutamine is bound by residues 385 to 388 (LGMQ), Glu-408, and Arg-465. Catalysis depends on residues His-510 and Glu-512.

The protein belongs to the CTP synthase family. In terms of assembly, homotetramer.

It catalyses the reaction UTP + L-glutamine + ATP + H2O = CTP + L-glutamate + ADP + phosphate + 2 H(+). The catalysed reaction is L-glutamine + H2O = L-glutamate + NH4(+). It carries out the reaction UTP + NH4(+) + ATP = CTP + ADP + phosphate + 2 H(+). It participates in pyrimidine metabolism; CTP biosynthesis via de novo pathway; CTP from UDP: step 2/2. With respect to regulation, allosterically activated by GTP, when glutamine is the substrate; GTP has no effect on the reaction when ammonia is the substrate. The allosteric effector GTP functions by stabilizing the protein conformation that binds the tetrahedral intermediate(s) formed during glutamine hydrolysis. Inhibited by the product CTP, via allosteric rather than competitive inhibition. Its function is as follows. Catalyzes the ATP-dependent amination of UTP to CTP with either L-glutamine or ammonia as the source of nitrogen. Regulates intracellular CTP levels through interactions with the four ribonucleotide triphosphates. The sequence is that of CTP synthase from Flavobacterium johnsoniae (strain ATCC 17061 / DSM 2064 / JCM 8514 / BCRC 14874 / CCUG 350202 / NBRC 14942 / NCIMB 11054 / UW101) (Cytophaga johnsonae).